A 619-amino-acid chain; its full sequence is Very-long-chain aldehyde decarbonylase GL1-4 (619 aa).

The next 5 helical transmembrane spans lie at 45–65 (IAFS…QIWI), 94–114 (GWDD…LAMP), 126–146 (GAVV…YWFH), 178–198 (FAEH…TIYL), and 325–345 (AWYM…AWIY). Residues 138 to 272 (VEFLYYWFHR…MPFYDYIYNT (135 aa)) enclose the Fatty acid hydroxylase domain.

Belongs to the sterol desaturase family. In terms of assembly, homodimer. In terms of tissue distribution, expressed ubiquitously at low levels, with higher accumulation in developing panicles, shoots and flag leaves.

It is found in the endoplasmic reticulum membrane. It carries out the reaction a long-chain fatty aldehyde + 2 NADPH + O2 + H(+) = a long-chain alkane + formate + 2 NADP(+) + H2O. Functionally, aldehyde decarbonylase involved in the conversion of aldehydes to alkanes. Core component of a very-long-chain alkane synthesis complex. The sequence is that of Very-long-chain aldehyde decarbonylase GL1-4 from Oryza sativa subsp. japonica (Rice).